Reading from the N-terminus, the 374-residue chain is Pectate lyase 1 (374 aa).

A signal peptide spans 1 to 22 (MKYLLPSAAAGLLLLAAQPTMA). Cys93 and Cys176 are oxidised to a cystine. Ca(2+) contacts are provided by Asp150, Asp152, Glu187, and Asp191. The active site involves Arg239. A disulfide bridge links Cys350 with Cys373.

It belongs to the polysaccharide lyase 1 family. PLADES subfamily. Ca(2+) is required as a cofactor.

It is found in the secreted. The enzyme catalyses Eliminative cleavage of (1-&gt;4)-alpha-D-galacturonan to give oligosaccharides with 4-deoxy-alpha-D-galact-4-enuronosyl groups at their non-reducing ends.. The protein operates within glycan metabolism; pectin degradation; 2-dehydro-3-deoxy-D-gluconate from pectin: step 2/5. Involved in maceration and soft-rotting of plant tissue. The polypeptide is Pectate lyase 1 (pel1) (Pectobacterium carotovorum (Erwinia carotovora)).